The chain runs to 315 residues: Iron(3+)-hydroxamate-binding protein FhuD (315 aa).

Residues Met1–Ala23 form the signal peptide. Cys24 carries the N-palmitoyl cysteine lipid modification. Residue Cys24 is the site of S-diacylglycerol cysteine attachment. The Fe/B12 periplasmic-binding domain maps to Arg60 to Lys315.

Belongs to the bacterial solute-binding protein 8 family. As to quaternary structure, the complex is composed of an ATP-binding protein (FhuC), two transmembrane proteins (FhuB and FhuG) and a solute-binding protein (FhuD or YxeB).

It is found in the cell membrane. The protein localises to the membrane raft. Functionally, part of the ABC transporter complex FhuCBGD involved in iron(3+)-hydroxamate import. Binds the iron(3+)-hydroxamate complex and transfers it to the membrane-bound permease. Required for the transport of ferrichrome and coprogen. The polypeptide is Iron(3+)-hydroxamate-binding protein FhuD (fhuD) (Bacillus subtilis (strain 168)).